Reading from the N-terminus, the 205-residue chain is Holliday junction branch migration complex subunit RuvA (205 aa).

The segment at 1–67 is domain I; it reads MITSIFGKVT…QIIEEAFAFN (67 aa). Residues 68-146 are domain II; it reads TLEEKEWFCR…NNKNIKGVQV (79 aa). The flexible linker stretch occupies residues 147 to 150; it reads ADGY. A domain III region spans residues 150 to 205; it reads YDELFETLKSLGYKQQEIQDALKMIEVKPDFDISQLVAEVIKLMSFKNNEITNKTA.

This sequence belongs to the RuvA family. In terms of assembly, homotetramer. Forms an RuvA(8)-RuvB(12)-Holliday junction (HJ) complex. HJ DNA is sandwiched between 2 RuvA tetramers; dsDNA enters through RuvA and exits via RuvB. An RuvB hexamer assembles on each DNA strand where it exits the tetramer. Each RuvB hexamer is contacted by two RuvA subunits (via domain III) on 2 adjacent RuvB subunits; this complex drives branch migration. In the full resolvosome a probable DNA-RuvA(4)-RuvB(12)-RuvC(2) complex forms which resolves the HJ.

It localises to the cytoplasm. Its function is as follows. The RuvA-RuvB-RuvC complex processes Holliday junction (HJ) DNA during genetic recombination and DNA repair, while the RuvA-RuvB complex plays an important role in the rescue of blocked DNA replication forks via replication fork reversal (RFR). RuvA specifically binds to HJ cruciform DNA, conferring on it an open structure. The RuvB hexamer acts as an ATP-dependent pump, pulling dsDNA into and through the RuvAB complex. HJ branch migration allows RuvC to scan DNA until it finds its consensus sequence, where it cleaves and resolves the cruciform DNA. The sequence is that of Holliday junction branch migration complex subunit RuvA from Mycoplasma genitalium (strain ATCC 33530 / DSM 19775 / NCTC 10195 / G37) (Mycoplasmoides genitalium).